The primary structure comprises 179 residues: Acireductone dioxygenase (179 aa).

Positions 97, 99, 103, and 141 each coordinate Fe(2+). 4 residues coordinate Ni(2+): His-97, His-99, Glu-103, and His-141.

It belongs to the acireductone dioxygenase (ARD) family. As to quaternary structure, monomer. Fe(2+) serves as cofactor. The cofactor is Ni(2+).

The catalysed reaction is 1,2-dihydroxy-5-(methylsulfanyl)pent-1-en-3-one + O2 = 3-(methylsulfanyl)propanoate + CO + formate + 2 H(+). It catalyses the reaction 1,2-dihydroxy-5-(methylsulfanyl)pent-1-en-3-one + O2 = 4-methylsulfanyl-2-oxobutanoate + formate + 2 H(+). It participates in amino-acid biosynthesis; L-methionine biosynthesis via salvage pathway; L-methionine from S-methyl-5-thio-alpha-D-ribose 1-phosphate: step 5/6. Its function is as follows. Catalyzes 2 different reactions between oxygen and the acireductone 1,2-dihydroxy-3-keto-5-methylthiopentene (DHK-MTPene) depending upon the metal bound in the active site. Fe-containing acireductone dioxygenase (Fe-ARD) produces formate and 2-keto-4-methylthiobutyrate (KMTB), the alpha-ketoacid precursor of methionine in the methionine recycle pathway. Ni-containing acireductone dioxygenase (Ni-ARD) produces methylthiopropionate, carbon monoxide and formate, and does not lie on the methionine recycle pathway. The protein is Acireductone dioxygenase of Gluconacetobacter diazotrophicus (strain ATCC 49037 / DSM 5601 / CCUG 37298 / CIP 103539 / LMG 7603 / PAl5).